Consider the following 324-residue polypeptide: Probable UDP-sugar transporter protein SLC35A4 (324 aa).

Topologically, residues 1–18 are cytoplasmic; sequence MSVEDGGVPGLARPRQAR. The helical transmembrane segment at 19-39 threads the bilayer; the sequence is WTLLLFLSTAMYGAHAPFLAL. Topologically, residues 40-52 are lumenal; that stretch reads CHVDGRVPFRPSS. Residues 53–73 traverse the membrane as a helical segment; that stretch reads AVLLTELTKLLLCAFSLLVGW. The Cytoplasmic portion of the chain corresponds to 74–85; it reads QTWPQGTPPWRQ. A helical transmembrane segment spans residues 86–106; that stretch reads AVPFALSALLYGANNNLVIYL. The Lumenal portion of the chain corresponds to 107–142; sequence QRYMDPSTYQVLSNLKIGSTALLYCLCLGHRLSARQ. The chain crosses the membrane as a helical span at residues 143–163; the sequence is GLALLLLMAAGACYASGGFQE. Topologically, residues 164–180 are cytoplasmic; the sequence is PVNTLPGPASAAGAHPM. A helical membrane pass occupies residues 181-201; that stretch reads PLHITPLGLLLLILYCLISGL. Residues 202-214 lie on the Lumenal side of the membrane; it reads SSVYTELIMKRQR. The helical transmembrane segment at 215–235 threads the bilayer; the sequence is LPLALQNLFLYTFGVILNFGL. At 236 to 248 the chain is on the cytoplasmic side; sequence YAGSGPGPGFLEG. A helical transmembrane segment spans residues 249 to 271; sequence FSGWAVLVVLNQAVNGLLMSAVM. The Lumenal segment spans residues 272–279; sequence KHGSSITR. A helical transmembrane segment spans residues 280–300; sequence LFIVSCSLVVNAVLSAVLLQL. At 301–324 the chain is on the cytoplasmic side; the sequence is QLTAIFFLAALLIGLAVCLYYGSP.

Belongs to the nucleotide-sugar transporter family. SLC35A subfamily. Found in a complex with SLC35A2 and SLC35A3.

Its subcellular location is the golgi apparatus membrane. It catalyses the reaction CDP-L-ribitol(in) + CDP(out) = CDP-L-ribitol(out) + CDP(in). In terms of biological role, mediates the transport of CDP-ribitol. Does not exhibit CMP-sialic acid, UDP-galactose and UDP-N-acetylglucosamine transport activity. The protein is Probable UDP-sugar transporter protein SLC35A4 of Mus musculus (Mouse).